The following is a 496-amino-acid chain: MVEADHPGKLFIGGLNRETNEKMLKAVFGKHGPISEVLLIKDRTSKSRGFAFITFENPADAKNAAKDMNGKSLHGKAIKVEQAKKPSFQSGGRRRPPASSRNRSPSGSLRSARGSRGGTRGWLPSQEGHLDDGGYTPDLKMSYSRGLIPVKRGPSSRSGGPPPKKSAPSAVARSNSWMGSQGPMSQRRENYGVPPRRATISSWRNDRMSTRHDGYATNDGNHPSCQETRDYAPPSRGYAYRDNGHSNRDEHSSRGYRNHRSSRETRDYAPPSRGHAYRDYGHSRRDESYSRGYRNRRSSRETREYAPPSRGHGYRDYGHSRRHESYSRGYRNHPSSRETRDYAPPHRDYAYRDYGHSSWDEHSSRGYSYHDGYGEALGRDHSEHLSGSSYRDALQRYGTSHGAPPARGPRMSYGGSTCHAYSNTRDRYGRSWESYSSCGDFHYCDREHVCRKDQRNPPSLGRVLPDPREAYGSSSYVASIVDGGESRSEKGDSSRY.

In terms of domain architecture, RRM spans 8-85 (GKLFIGGLNR…KAIKVEQAKK (78 aa)). 2 disordered regions span residues 67 to 349 (DMNG…HRDY) and 452 to 496 (KDQR…SSRY). 2 stretches are compositionally biased toward low complexity: residues 97–114 (PASSRNRSPSGSLRSARG) and 149–159 (PVKRGPSSRSG). Polar residues predominate over residues 175 to 184 (NSWMGSQGPM). Basic and acidic residues-rich tracts occupy residues 204 to 214 (RNDRMSTRHDG), 242 to 253 (DNGHSNRDEHSS), 276 to 289 (AYRDYGHSRRDESY), 313 to 326 (GYRDYGHSRRHESY), 335 to 349 (SSRETRDYAPPHRDY), and 484 to 496 (GESRSEKGDSSRY).

Interacts with splicing factor proteins SFRS3/SRP20, TRA2B/SFRS10, KHDRBS1/SAM68 and KHDRBS3. In terms of tissue distribution, testis-specific.

It is found in the nucleus. In terms of biological role, RNA-binding protein which may be involved in spermatogenesis. Required for sperm development, possibly by participating in pre-mRNA splicing in the testis. The sequence is that of RNA-binding motif protein, Y chromosome, family 1 member B (RBMY1B) from Homo sapiens (Human).